The chain runs to 559 residues: Glycerol kinase (559 aa).

T20 is a binding site for ADP. ATP is bound by residues T20, S21, and S22. T20 provides a ligand contact to sn-glycerol 3-phosphate. R24 is an ADP binding site. Sn-glycerol 3-phosphate is bound by residues R94, E95, and Y148. Glycerol is bound by residues R94, E95, and Y148. G252 lines the beta-D-fructose 1,6-bisphosphate pocket. Sn-glycerol 3-phosphate is bound at residue D265. 2 residues coordinate glycerol: D265 and Q266. The ADP site is built by T287, G332, G433, and N437. T287, G332, and G433 together coordinate ATP. E501 lines the Zn(2+) pocket. Residues 532–552 (IFCSLPLGFFIVSSVVMLIGA) form a helical membrane-spanning segment.

This sequence belongs to the FGGY kinase family.

Its subcellular location is the mitochondrion outer membrane. It localises to the nucleus. The protein localises to the cytoplasm. The protein resides in the cytosol. The catalysed reaction is glycerol + ATP = sn-glycerol 3-phosphate + ADP + H(+). Its pathway is polyol metabolism; glycerol degradation via glycerol kinase pathway; sn-glycerol 3-phosphate from glycerol: step 1/1. Kinase that plays a key role in glycerol metabolism, catalyzing its phosphorylation to produce sn-glycerol 3-phosphate. Sn-glycerol 3-phosphate is a crucial intermediate in various metabolic pathways, such as the synthesis of glycerolipids and triglycerides, glycogenesis, glycolysis and gluconeogenesis. This chain is Glycerol kinase, found in Bos taurus (Bovine).